A 96-amino-acid polypeptide reads, in one-letter code: Myoglobin (96 aa).

A Globin domain is found at 1 to 96 (GLSDGEWQLV…AKTKELGFLG (96 aa)). Residue serine 3 is modified to Phosphoserine. Histidine 61 serves as a coordination point for nitrite. Histidine 61 is an O2 binding site. A Phosphothreonine modification is found at threonine 64.

This sequence belongs to the globin family. As to quaternary structure, monomeric.

It localises to the cytoplasm. The protein localises to the sarcoplasm. The enzyme catalyses Fe(III)-heme b-[protein] + nitric oxide + H2O = Fe(II)-heme b-[protein] + nitrite + 2 H(+). The catalysed reaction is H2O2 + AH2 = A + 2 H2O. Functionally, monomeric heme protein which primary function is to store oxygen and facilitate its diffusion within muscle tissues. Reversibly binds oxygen through a pentacoordinated heme iron and enables its timely and efficient release as needed during periods of heightened demand. Depending on the oxidative conditions of tissues and cells, and in addition to its ability to bind oxygen, it also has a nitrite reductase activity whereby it regulates the production of bioactive nitric oxide. Under stress conditions, like hypoxia and anoxia, it also protects cells against reactive oxygen species thanks to its pseudoperoxidase activity. This chain is Myoglobin (MB), found in Ailuropoda melanoleuca (Giant panda).